A 710-amino-acid polypeptide reads, in one-letter code: Phosphoribosylformylglycinamidine synthase subunit PurL (710 aa).

His-36 is an active-site residue. Positions 39 and 80 each coordinate ATP. Glu-82 serves as a coordination point for Mg(2+). Substrate contacts are provided by residues 83–86 and Arg-105; that span reads SHNH. Catalysis depends on His-84, which acts as the Proton acceptor. Mg(2+) is bound at residue Asp-106. Gln-226 provides a ligand contact to substrate. Asp-252 serves as a coordination point for Mg(2+). 294–296 contacts substrate; that stretch reads ETQ. 2 residues coordinate ATP: Asp-470 and Gly-507. Ser-510 contributes to the substrate binding site.

The protein belongs to the FGAMS family. In terms of assembly, monomer. Part of the FGAM synthase complex composed of 1 PurL, 1 PurQ and 2 PurS subunits.

It is found in the cytoplasm. The enzyme catalyses N(2)-formyl-N(1)-(5-phospho-beta-D-ribosyl)glycinamide + L-glutamine + ATP + H2O = 2-formamido-N(1)-(5-O-phospho-beta-D-ribosyl)acetamidine + L-glutamate + ADP + phosphate + H(+). Its pathway is purine metabolism; IMP biosynthesis via de novo pathway; 5-amino-1-(5-phospho-D-ribosyl)imidazole from N(2)-formyl-N(1)-(5-phospho-D-ribosyl)glycinamide: step 1/2. Part of the phosphoribosylformylglycinamidine synthase complex involved in the purines biosynthetic pathway. Catalyzes the ATP-dependent conversion of formylglycinamide ribonucleotide (FGAR) and glutamine to yield formylglycinamidine ribonucleotide (FGAM) and glutamate. The FGAM synthase complex is composed of three subunits. PurQ produces an ammonia molecule by converting glutamine to glutamate. PurL transfers the ammonia molecule to FGAR to form FGAM in an ATP-dependent manner. PurS interacts with PurQ and PurL and is thought to assist in the transfer of the ammonia molecule from PurQ to PurL. The chain is Phosphoribosylformylglycinamidine synthase subunit PurL from Sulfolobus acidocaldarius (strain ATCC 33909 / DSM 639 / JCM 8929 / NBRC 15157 / NCIMB 11770).